A 264-amino-acid polypeptide reads, in one-letter code: Small ribosomal subunit protein eS1 (264 aa).

The residue at position 34 (Lys-34) is an N6-acetyllysine; alternate. A Glycyl lysine isopeptide (Lys-Gly) (interchain with G-Cter in SUMO2); alternate cross-link involves residue Lys-34. Lys-56 carries the post-translational modification N6-acetyllysine. Residue Tyr-155 is modified to ADP-ribosyltyrosine. A disordered region spans residues 232-264 (HGEGSSSGKATGDETGAKVERADGYEPPVQESV). 2 positions are modified to phosphoserine: Ser-236 and Ser-237. Basic and acidic residues predominate over residues 242 to 255 (TGDETGAKVERADG). Lys-249 carries the N6-acetyllysine; alternate modification. Lys-249 participates in a covalent cross-link: Glycyl lysine isopeptide (Lys-Gly) (interchain with G-Cter in SUMO2); alternate. Tyr-256 is modified (phosphotyrosine). A Phosphoserine modification is found at Ser-263.

The protein belongs to the eukaryotic ribosomal protein eS1 family. As to quaternary structure, component of the small ribosomal subunit. Mature ribosomes consist of a small (40S) and a large (60S) subunit. The 40S subunit contains about 33 different proteins and 1 molecule of RNA (18S). The 60S subunit contains about 49 different proteins and 3 molecules of RNA (28S, 5.8S and 5S). Identified in a IGF2BP1-dependent mRNP granule complex containing untranslated mRNAs. Binds with high affinity to IPO4. Interacts with DDIT3. Part of the small subunit (SSU) processome, composed of more than 70 proteins and the RNA chaperone small nucleolar RNA (snoRNA) U3. In terms of processing, ADP-ribosylated at Tyr-155 by PARP1 in presence of HPF1.

The protein localises to the cytoplasm. It localises to the nucleus. The protein resides in the nucleolus. Its function is as follows. Component of the small ribosomal subunit. The ribosome is a large ribonucleoprotein complex responsible for the synthesis of proteins in the cell. Part of the small subunit (SSU) processome, first precursor of the small eukaryotic ribosomal subunit. During the assembly of the SSU processome in the nucleolus, many ribosome biogenesis factors, an RNA chaperone and ribosomal proteins associate with the nascent pre-rRNA and work in concert to generate RNA folding, modifications, rearrangements and cleavage as well as targeted degradation of pre-ribosomal RNA by the RNA exosome. May play a role during erythropoiesis through regulation of transcription factor DDIT3. This chain is Small ribosomal subunit protein eS1, found in Macaca fascicularis (Crab-eating macaque).